Reading from the N-terminus, the 453-residue chain is UDP-N-acetylmuramoylalanine--D-glutamate ligase (453 aa).

117-123 (GTNGKTT) lines the ATP pocket.

This sequence belongs to the MurCDEF family.

The protein localises to the cytoplasm. The catalysed reaction is UDP-N-acetyl-alpha-D-muramoyl-L-alanine + D-glutamate + ATP = UDP-N-acetyl-alpha-D-muramoyl-L-alanyl-D-glutamate + ADP + phosphate + H(+). Its pathway is cell wall biogenesis; peptidoglycan biosynthesis. Its function is as follows. Cell wall formation. Catalyzes the addition of glutamate to the nucleotide precursor UDP-N-acetylmuramoyl-L-alanine (UMA). This chain is UDP-N-acetylmuramoylalanine--D-glutamate ligase, found in Caldicellulosiruptor saccharolyticus (strain ATCC 43494 / DSM 8903 / Tp8T 6331).